The sequence spans 858 residues: Translation initiation factor IF-2 (858 aa).

Residues 59-147 (KEHAEKRRER…GKKLEGQERK (89 aa)) form a disordered region. The region spanning 361–530 (PRPPVVVVMG…LLVADLLELK (170 aa)) is the tr-type G domain. The G1 stretch occupies residues 370–377 (GHVDHGKT). 370–377 (GHVDHGKT) lines the GTP pocket. Residues 395-399 (GITQH) are G2. The G3 stretch occupies residues 416–419 (DTPG). Residues 416-420 (DTPGH) and 470-473 (NKID) each bind GTP. The interval 470-473 (NKID) is G4. The interval 506-508 (SAK) is G5.

This sequence belongs to the TRAFAC class translation factor GTPase superfamily. Classic translation factor GTPase family. IF-2 subfamily.

It is found in the cytoplasm. Its function is as follows. One of the essential components for the initiation of protein synthesis. Protects formylmethionyl-tRNA from spontaneous hydrolysis and promotes its binding to the 30S ribosomal subunits. Also involved in the hydrolysis of GTP during the formation of the 70S ribosomal complex. The chain is Translation initiation factor IF-2 from Caldicellulosiruptor saccharolyticus (strain ATCC 43494 / DSM 8903 / Tp8T 6331).